A 243-amino-acid polypeptide reads, in one-letter code: Exosome complex component Rrp41 (243 aa).

This sequence belongs to the RNase PH family. Rrp41 subfamily. As to quaternary structure, component of the archaeal exosome complex. Forms a hexameric ring-like arrangement composed of 3 Rrp41-Rrp42 heterodimers. The hexameric ring associates with a trimer of Rrp4 and/or Csl4 subunits.

Its subcellular location is the cytoplasm. In terms of biological role, catalytic component of the exosome, which is a complex involved in RNA degradation. Has 3'-&gt;5' exoribonuclease activity. Can also synthesize heteromeric RNA-tails. The protein is Exosome complex component Rrp41 of Sulfolobus acidocaldarius (strain ATCC 33909 / DSM 639 / JCM 8929 / NBRC 15157 / NCIMB 11770).